The chain runs to 191 residues: Auxin-responsive protein IAA32 (191 aa).

The short motif at 32 to 36 is the EAR-like (transcriptional repression) element; sequence LGLSL. A PB1 domain is found at 98-184; it reads YAYVKVNLDG…SVDRMRIARR (87 aa).

This sequence belongs to the Aux/IAA family. As to quaternary structure, homodimers and heterodimers.

The protein localises to the nucleus. In terms of biological role, aux/IAA proteins are short-lived transcriptional factors that function as repressors of early auxin response genes at low auxin concentrations. Repression is thought to result from the interaction with auxin response factors (ARFs), proteins that bind to the auxin-responsive promoter element (AuxRE). Formation of heterodimers with ARF proteins may alter their ability to modulate early auxin response genes expression. In Arabidopsis thaliana (Mouse-ear cress), this protein is Auxin-responsive protein IAA32.